The sequence spans 426 residues: Probable alpha-galactosidase B (426 aa).

A signal peptide spans 1-13; sequence MSRSKTRQGKLPA. 2 disulfide bridges follow: cysteine 24–cysteine 56 and cysteine 106–cysteine 136. Aspartate 134 acts as the Nucleophile in catalysis. 2 N-linked (GlcNAc...) asparagine glycosylation sites follow: asparagine 141 and asparagine 159. 204–208 is a binding site for substrate; it reads EWGQA. The N-linked (GlcNAc...) asparagine glycan is linked to asparagine 215. Catalysis depends on aspartate 226, which acts as the Proton donor. A glycan (N-linked (GlcNAc...) asparagine) is linked at asparagine 265.

This sequence belongs to the glycosyl hydrolase 27 family.

The protein localises to the secreted. The catalysed reaction is Hydrolysis of terminal, non-reducing alpha-D-galactose residues in alpha-D-galactosides, including galactose oligosaccharides, galactomannans and galactolipids.. Hydrolyzes a variety of simple alpha-D-galactoside as well as more complex molecules such as oligosaccharides and polysaccharides. The chain is Probable alpha-galactosidase B (aglB) from Aspergillus fumigatus (strain CBS 144.89 / FGSC A1163 / CEA10) (Neosartorya fumigata).